A 233-amino-acid polypeptide reads, in one-letter code: Phosphatidylserine decarboxylase proenzyme (233 aa).

The active-site Schiff-base intermediate with substrate; via pyruvic acid is the Ser-190. Ser-190 is subject to Pyruvic acid (Ser); by autocatalysis.

It belongs to the phosphatidylserine decarboxylase family. PSD-A subfamily. In terms of assembly, heterodimer of a large membrane-associated beta subunit and a small pyruvoyl-containing alpha subunit. It depends on pyruvate as a cofactor. In terms of processing, is synthesized initially as an inactive proenzyme. Formation of the active enzyme involves a self-maturation process in which the active site pyruvoyl group is generated from an internal serine residue via an autocatalytic post-translational modification. Two non-identical subunits are generated from the proenzyme in this reaction, and the pyruvate is formed at the N-terminus of the alpha chain, which is derived from the carboxyl end of the proenzyme. The post-translation cleavage follows an unusual pathway, termed non-hydrolytic serinolysis, in which the side chain hydroxyl group of the serine supplies its oxygen atom to form the C-terminus of the beta chain, while the remainder of the serine residue undergoes an oxidative deamination to produce ammonia and the pyruvoyl prosthetic group on the alpha chain.

The protein localises to the cell membrane. The enzyme catalyses a 1,2-diacyl-sn-glycero-3-phospho-L-serine + H(+) = a 1,2-diacyl-sn-glycero-3-phosphoethanolamine + CO2. It participates in phospholipid metabolism; phosphatidylethanolamine biosynthesis; phosphatidylethanolamine from CDP-diacylglycerol: step 2/2. In terms of biological role, catalyzes the formation of phosphatidylethanolamine (PtdEtn) from phosphatidylserine (PtdSer). The protein is Phosphatidylserine decarboxylase proenzyme of Xanthobacter autotrophicus (strain ATCC BAA-1158 / Py2).